We begin with the raw amino-acid sequence, 397 residues long: 3-hydroxy-3-methylglutaryl-coenzyme A reductase (397 aa).

Residues Glu96 and Asp301 each act as charge relay system in the active site. His391 serves as the catalytic Proton donor.

This sequence belongs to the HMG-CoA reductase family.

The enzyme catalyses (R)-mevalonate + 2 NADP(+) + CoA = (3S)-3-hydroxy-3-methylglutaryl-CoA + 2 NADPH + 2 H(+). The protein operates within metabolic intermediate biosynthesis; (R)-mevalonate biosynthesis; (R)-mevalonate from acetyl-CoA: step 3/3. Functionally, converts HMG-CoA to mevalonate. The chain is 3-hydroxy-3-methylglutaryl-coenzyme A reductase (hmgA) from Methanothermobacter thermautotrophicus (strain ATCC 29096 / DSM 1053 / JCM 10044 / NBRC 100330 / Delta H) (Methanobacterium thermoautotrophicum).